The following is a 232-amino-acid chain: MDAREMKIKAAAAALAHVEDGMRLGIGTGSTAEEFVRLLAEKVASGFKVEGVPTSERTARLCVELGVPLKSLDELPALDLTIDGADEVDPALRLIKGGGGALLREKIVAAASERMIVIADESKLVDTLGAYALPIEVNPFGLVSTRIAIEKVAARLGLAGELSLRQSGDGEFTTDGGHHIIDASFGRIPDAEALSSELNSIPGVVEHGLFINMAALAIIAGPAGARTLQANR.

Substrate-binding positions include 28–31 (TGST), 83–86 (DGAD), and 96–99 (KGGG). Catalysis depends on E105, which acts as the Proton acceptor. K123 is a substrate binding site.

This sequence belongs to the ribose 5-phosphate isomerase family. Homodimer.

It catalyses the reaction aldehydo-D-ribose 5-phosphate = D-ribulose 5-phosphate. It functions in the pathway carbohydrate degradation; pentose phosphate pathway; D-ribose 5-phosphate from D-ribulose 5-phosphate (non-oxidative stage): step 1/1. Functionally, catalyzes the reversible conversion of ribose-5-phosphate to ribulose 5-phosphate. This chain is Ribose-5-phosphate isomerase A, found in Rhizobium leguminosarum bv. trifolii (strain WSM2304).